Reading from the N-terminus, the 140-residue chain is MSTIRCDIVSAEKEIFHGEATLVVATGELGELGIAPKHAPLITRLKPGKVVVTTANGEQLDFAISGGILEVQPQVVTILVDTAVRAQDIDEAAVRKVKEEAERLLANRGNTVDVAEAQRQLAEATVQLQALERLRRNLKH.

It belongs to the ATPase epsilon chain family. F-type ATPases have 2 components, CF(1) - the catalytic core - and CF(0) - the membrane proton channel. CF(1) has five subunits: alpha(3), beta(3), gamma(1), delta(1), epsilon(1). CF(0) has three main subunits: a, b and c.

Its subcellular location is the cell inner membrane. Its function is as follows. Produces ATP from ADP in the presence of a proton gradient across the membrane. This chain is ATP synthase epsilon chain, found in Xanthomonas axonopodis pv. citri (strain 306).